Consider the following 174-residue polypeptide: Methylated-DNA--protein-cysteine methyltransferase (174 aa).

The Nucleophile; methyl group acceptor role is filled by Cys-144.

Belongs to the MGMT family.

The protein resides in the cytoplasm. It catalyses the reaction a 6-O-methyl-2'-deoxyguanosine in DNA + L-cysteinyl-[protein] = S-methyl-L-cysteinyl-[protein] + a 2'-deoxyguanosine in DNA. The enzyme catalyses a 4-O-methyl-thymidine in DNA + L-cysteinyl-[protein] = a thymidine in DNA + S-methyl-L-cysteinyl-[protein]. In terms of biological role, involved in the cellular defense against the biological effects of O6-methylguanine (O6-MeG) and O4-methylthymine (O4-MeT) in DNA. Repairs the methylated nucleobase in DNA by stoichiometrically transferring the methyl group to a cysteine residue in the enzyme. This is a suicide reaction: the enzyme is irreversibly inactivated. This chain is Methylated-DNA--protein-cysteine methyltransferase, found in Pyrococcus furiosus (strain ATCC 43587 / DSM 3638 / JCM 8422 / Vc1).